A 148-amino-acid chain; its full sequence is Putative nickel-responsive regulator (148 aa).

The Ni(2+) site is built by H88, H99, H101, and C107.

The protein belongs to the transcriptional regulatory CopG/NikR family. Requires Ni(2+) as cofactor.

Functionally, transcriptional regulator. The sequence is that of Putative nickel-responsive regulator from Helicobacter pylori (strain Shi470).